We begin with the raw amino-acid sequence, 348 residues long: Uroporphyrinogen decarboxylase (348 aa).

Residues 27 to 31 (RQAGR), Phe46, Asp76, Tyr152, Ser207, and His320 contribute to the substrate site.

It belongs to the uroporphyrinogen decarboxylase family. In terms of assembly, homodimer.

Its subcellular location is the cytoplasm. It carries out the reaction uroporphyrinogen III + 4 H(+) = coproporphyrinogen III + 4 CO2. It functions in the pathway porphyrin-containing compound metabolism; protoporphyrin-IX biosynthesis; coproporphyrinogen-III from 5-aminolevulinate: step 4/4. Functionally, catalyzes the decarboxylation of four acetate groups of uroporphyrinogen-III to yield coproporphyrinogen-III. This is Uroporphyrinogen decarboxylase from Bacillus cereus (strain G9842).